The sequence spans 295 residues: Carbapenem-hydrolyzing beta-lactamase transcriptional activator (295 aa).

The 58-residue stretch at 5–62 (LPLNALRAFEASARYLNFTKAGLELHVSQAAVSQQVRTLEQMLGVALFTRVPRGLQLT) folds into the HTH lysR-type domain. Residues 22-41 (FTKAGLELHVSQAAVSQQVR) constitute a DNA-binding region (H-T-H motif).

The protein belongs to the LysR transcriptional regulatory family.

Its function is as follows. This protein is a positive regulator of gene expression of carbapenem-hydrolyzing beta-lactamase (NmcA). This Enterobacter cloacae protein is Carbapenem-hydrolyzing beta-lactamase transcriptional activator (nmcR).